A 92-amino-acid polypeptide reads, in one-letter code: Small nuclear ribonucleoprotein E (92 aa).

The 75-residue stretch at 18-92 folds into the Sm domain; that stretch reads INLIFRYLQN…NITLLQSVSN (75 aa).

It belongs to the snRNP Sm proteins family. Core component of the spliceosomal U1, U2, U4 and U5 small nuclear ribonucleoproteins (snRNPs), the building blocks of the spliceosome. Most spliceosomal snRNPs contain a common set of Sm proteins, SNRPB, SNRPD1, SNRPD2, SNRPD3, SNRPE, SNRPF and SNRPG that assemble in a heptameric protein ring on the Sm site of the small nuclear RNA to form the core snRNP. Component of the U1 snRNP. The U1 snRNP is composed of the U1 snRNA and the 7 core Sm proteins SNRPB, SNRPD1, SNRPD2, SNRPD3, SNRPE, SNRPF and SNRPG, and at least three U1 snRNP-specific proteins SNRNP70/U1-70K, SNRPA/U1-A and SNRPC/U1-C. Component of the U4/U6-U5 tri-snRNP complex composed of the U4, U6 and U5 snRNAs and at least PRPF3, PRPF4, PRPF6, PRPF8, PRPF31, SNRNP200, TXNL4A, SNRNP40, SNRPB, SNRPD1, SNRPD2, SNRPD3, SNRPE, SNRPF, SNRPG, DDX23, CD2BP2, PPIH, SNU13, EFTUD2, SART1 and USP39, plus LSM2, LSM3, LSM4, LSM5, LSM6, LSM7 and LSM8. Component of the U7 snRNP complex, or U7 Sm protein core complex, that is composed of the U7 snRNA and at least LSM10, LSM11, SNRPB, SNRPD3, SNRPE, SNRPF and SNRPG; the complex does not contain SNRPD1 and SNRPD2. Component of the minor spliceosome, which splices U12-type introns. Part of the SMN-Sm complex that contains SMN1, GEMIN2/SIP1, DDX20/GEMIN3, GEMIN4, GEMIN5, GEMIN6, GEMIN7, GEMIN8, STRAP/UNRIP and the Sm proteins SNRPB, SNRPD1, SNRPD2, SNRPD3, SNRPE, SNRPF and SNRPG; catalyzes core snRNPs assembly. Forms a 6S pICln-Sm complex composed of CLNS1A/pICln, SNRPD1, SNRPD2, SNRPE, SNRPF and SNRPG; ring-like structure where CLNS1A/pICln mimics additional Sm proteins and which is unable to assemble into the core snRNP. Interacts with SMN1; the interaction is direct. Interacts with GEMIN2 (via N-terminus); the interaction is direct. Interacts with SNRPF; the interaction is direct. Interacts with SNRPG; the interaction is direct.

Its subcellular location is the cytoplasm. It localises to the cytosol. The protein localises to the nucleus. In terms of biological role, plays a role in pre-mRNA splicing as a core component of the spliceosomal U1, U2, U4 and U5 small nuclear ribonucleoproteins (snRNPs), the building blocks of the spliceosome. Component of both the pre-catalytic spliceosome B complex and activated spliceosome C complexes. As a component of the minor spliceosome, involved in the splicing of U12-type introns in pre-mRNAs. As part of the U7 snRNP it is involved in histone 3'-end processing. The polypeptide is Small nuclear ribonucleoprotein E (SNRPE) (Sus scrofa (Pig)).